A 681-amino-acid polypeptide reads, in one-letter code: Potassium-transporting ATPase ATP-binding subunit (681 aa).

4 helical membrane-spanning segments follow: residues 30–50 (LLVY…FFGI), 59–79 (LAIA…EAIA), 216–236 (ILLV…LPFT), and 255–275 (IALL…SIGI). The 4-aspartylphosphate intermediate role is filled by aspartate 306. ATP is bound by residues aspartate 343, glutamate 347, 376-383 (FTATTRMS), and lysine 394. Mg(2+)-binding residues include aspartate 517 and aspartate 521. A run of 3 helical transmembrane segments spans residues 587-607 (FAII…LNLM), 615-635 (AILS…PLSL), and 661-681 (LIAP…LGIV).

This sequence belongs to the cation transport ATPase (P-type) (TC 3.A.3) family. Type IA subfamily. As to quaternary structure, the system is composed of three essential subunits: KdpA, KdpB and KdpC.

The protein resides in the cell membrane. It catalyses the reaction K(+)(out) + ATP + H2O = K(+)(in) + ADP + phosphate + H(+). Functionally, part of the high-affinity ATP-driven potassium transport (or Kdp) system, which catalyzes the hydrolysis of ATP coupled with the electrogenic transport of potassium into the cytoplasm. This subunit is responsible for energy coupling to the transport system and for the release of the potassium ions to the cytoplasm. This Listeria monocytogenes serotype 4a (strain HCC23) protein is Potassium-transporting ATPase ATP-binding subunit.